The sequence spans 2367 residues: RNA1 polyprotein (2367 aa).

At 587–1194 (AKCEDLAVVS…GGRLLLILCS (608 aa)) the chain is on the cytoplasmic side. The SF3 helicase domain occupies 776-940 (ELRTLRNDMA…AGVAFNPHDS (165 aa)). 804 to 811 (GPPGVGKT) is a binding site for ATP. A helical membrane pass occupies residues 1195 to 1215 (CMLLGIACYTFFNALAILIGG). Topologically, residues 1216 to 1235 (TSVAAGAAAMVDIGACGSTS) are lumenal. The Peptidase C3 domain maps to 1258-1468 (PAVWSEETGH…YVCKFPHIEV (211 aa)). Residues His-1302, Glu-1339, and Cys-1432 each act as for picornain 3C-like protease activity in the active site. Positions 1832-1957 (DKMYCCDYSK…GIHPNIESAF (126 aa)) constitute a RdRp catalytic domain.

The protein belongs to the nepoviruses RNA1 polyprotein family. In terms of processing, specific enzymatic cleavages by picornain 3C-like protease in vivo yield mature proteins. Picornain 3C-like protease is autocatalytically processed. VPg is uridylylated by the polymerase and is covalently linked to the 5'-end of genomic RNA. This uridylylated form acts as a nucleotide-peptide primer for the polymerase.

It localises to the host endoplasmic reticulum lumen. The protein localises to the host endoplasmic reticulum membrane. It carries out the reaction RNA(n) + a ribonucleoside 5'-triphosphate = RNA(n+1) + diphosphate. Its function is as follows. Picornain 3C-like protease is a thiol protease that cleaves the P1 and P2 polyproteins. This is RNA1 polyprotein from Fragaria vesca (Woodland strawberry).